The primary structure comprises 301 residues: Large ribosomal subunit protein uL18 (301 aa).

The protein belongs to the universal ribosomal protein uL18 family. In terms of assembly, component of the large ribosomal subunit (LSU). Mature N.crassa ribosomes consist of a small (40S) and a large (60S) subunit. The 40S small subunit contains 1 molecule of ribosomal RNA (18S rRNA) and at least 32 different proteins. The large 60S subunit contains 3 rRNA molecules (26S, 5.8S and 5S rRNA) and at least 42 different proteins.

The protein resides in the cytoplasm. Functionally, component of the ribosome, a large ribonucleoprotein complex responsible for the synthesis of proteins in the cell. The small ribosomal subunit (SSU) binds messenger RNAs (mRNAs) and translates the encoded message by selecting cognate aminoacyl-transfer RNA (tRNA) molecules. The large subunit (LSU) contains the ribosomal catalytic site termed the peptidyl transferase center (PTC), which catalyzes the formation of peptide bonds, thereby polymerizing the amino acids delivered by tRNAs into a polypeptide chain. The nascent polypeptides leave the ribosome through a tunnel in the LSU and interact with protein factors that function in enzymatic processing, targeting, and the membrane insertion of nascent chains at the exit of the ribosomal tunnel. In Neurospora crassa (strain ATCC 24698 / 74-OR23-1A / CBS 708.71 / DSM 1257 / FGSC 987), this protein is Large ribosomal subunit protein uL18 (rpl-5).